We begin with the raw amino-acid sequence, 261 residues long: Pantothenate synthetase (261 aa).

29–36 is an ATP binding site; sequence MGALHNGH. His-36 functions as the Proton donor in the catalytic mechanism. Gln-60 contacts (R)-pantoate. Residue Gln-60 coordinates beta-alanine. Residue 147-150 participates in ATP binding; it reads GEKD. Residue Gln-153 coordinates (R)-pantoate. 184–187 is a binding site for ATP; the sequence is LSSR.

Belongs to the pantothenate synthetase family. As to quaternary structure, homodimer.

Its subcellular location is the cytoplasm. The catalysed reaction is (R)-pantoate + beta-alanine + ATP = (R)-pantothenate + AMP + diphosphate + H(+). Its pathway is cofactor biosynthesis; (R)-pantothenate biosynthesis; (R)-pantothenate from (R)-pantoate and beta-alanine: step 1/1. Functionally, catalyzes the condensation of pantoate with beta-alanine in an ATP-dependent reaction via a pantoyl-adenylate intermediate. The sequence is that of Pantothenate synthetase from Francisella tularensis subsp. mediasiatica (strain FSC147).